Here is a 332-residue protein sequence, read N- to C-terminus: Long form salivary protein D7L1 (332 aa).

A signal peptide spans 1–21; sequence MHSPKSFLLLAVVFVALRVTA. 2 cysteine pairs are disulfide-bonded: Cys-40/Cys-77 and Cys-73/Cys-133. Trp-61 provides a ligand contact to leukotriene E4. Lys-176 contacts leukotriene E4. 3 disulfides stabilise this stretch: Cys-184-Cys-219, Cys-200-Cys-331, and Cys-259-Cys-278. The noradrenaline site is built by Glu-185 and Arg-203. Noradrenaline is bound by residues Asp-294 and Glu-297.

The protein belongs to the PBP/GOBP family. In terms of tissue distribution, female mosquito salivary gland (at protein level).

It localises to the secreted. Modulates blood feeding of female mosquitoes on vertebrate species by binding and sequestering different mediators involved in the host response, such as biogenic amines and eicosanoids. Binds dopamine, serotonin, histamine, tryptamine, adrenaline, noradrenaline, leukotriene B4, leukotriene C4, leukotriene D4, leukotriene E4 and U-46619, a stable analog of thromboxane A2. Inhibits platelet aggregation induced by serotonin and low doses of thromboxane A2 analog U-46619 but not by high doses of U-46619, collagen or ADP. Prevents leukocyte recruitment. The polypeptide is Long form salivary protein D7L1 (Aedes albopictus (Asian tiger mosquito)).